Consider the following 438-residue polypeptide: 3-phosphoshikimate 1-carboxyvinyltransferase (438 aa).

3 residues coordinate 3-phosphoshikimate: Lys-28, Ser-29, and Arg-33. A phosphoenolpyruvate-binding site is contributed by Lys-28. Positions 97 and 125 each coordinate phosphoenolpyruvate. 3-phosphoshikimate-binding residues include Ser-168, Ser-169, Gln-170, Glu-316, and His-343. Residue Gln-170 participates in phosphoenolpyruvate binding. The active-site Proton acceptor is Glu-316. The phosphoenolpyruvate site is built by Arg-347, Arg-388, and Lys-413.

This sequence belongs to the EPSP synthase family. In terms of assembly, monomer.

Its subcellular location is the cytoplasm. It catalyses the reaction 3-phosphoshikimate + phosphoenolpyruvate = 5-O-(1-carboxyvinyl)-3-phosphoshikimate + phosphate. It functions in the pathway metabolic intermediate biosynthesis; chorismate biosynthesis; chorismate from D-erythrose 4-phosphate and phosphoenolpyruvate: step 6/7. Functionally, catalyzes the transfer of the enolpyruvyl moiety of phosphoenolpyruvate (PEP) to the 5-hydroxyl of shikimate-3-phosphate (S3P) to produce enolpyruvyl shikimate-3-phosphate and inorganic phosphate. This Rhodococcus jostii (strain RHA1) protein is 3-phosphoshikimate 1-carboxyvinyltransferase.